The chain runs to 123 residues: Galanin peptides (123 aa).

Residues 1–19 (MARGSALLLASLLLAAALS) form the signal peptide. Positions 20-30 (ASAGLWSPAKE) are excised as a propeptide. The segment at 46 to 80 (HAVGNHRSFSDKNGLTSKRELRPEDDMKPGSFDRS) is disordered. Positions 62–73 (SKRELRPEDDMK) are enriched in basic and acidic residues. Phosphoserine is present on residues serine 116 and serine 117.

Belongs to the galanin family.

The protein localises to the secreted. In terms of biological role, endocrine hormone of the central and peripheral nervous systems that binds and activates the G protein-coupled receptors GALR1, GALR2, and GALR3. This small neuropeptide may regulate diverse physiologic functions including contraction of smooth muscle of the gastrointestinal and genitourinary tract, growth hormone and insulin release and adrenal secretion. This chain is Galanin peptides (GAL), found in Homo sapiens (Human).